The following is a 184-amino-acid chain: Putative lyase MJ0807 (184 aa).

It belongs to the chorismate pyruvate-lyase type 2 family.

In Methanocaldococcus jannaschii (strain ATCC 43067 / DSM 2661 / JAL-1 / JCM 10045 / NBRC 100440) (Methanococcus jannaschii), this protein is Putative lyase MJ0807.